Reading from the N-terminus, the 274-residue chain is Diaminopimelate epimerase (274 aa).

Substrate contacts are provided by asparagine 11, glutamine 44, and asparagine 64. The Proton donor role is filled by cysteine 73. Substrate contacts are provided by residues 74–75, asparagine 157, asparagine 190, and 208–209; these read GN and ER. The Proton acceptor role is filled by cysteine 217. Position 218 to 219 (218 to 219) interacts with substrate; that stretch reads GS.

Belongs to the diaminopimelate epimerase family. In terms of assembly, homodimer.

Its subcellular location is the cytoplasm. The catalysed reaction is (2S,6S)-2,6-diaminopimelate = meso-2,6-diaminopimelate. It functions in the pathway amino-acid biosynthesis; L-lysine biosynthesis via DAP pathway; DL-2,6-diaminopimelate from LL-2,6-diaminopimelate: step 1/1. Catalyzes the stereoinversion of LL-2,6-diaminopimelate (L,L-DAP) to meso-diaminopimelate (meso-DAP), a precursor of L-lysine and an essential component of the bacterial peptidoglycan. In Pasteurella multocida (strain Pm70), this protein is Diaminopimelate epimerase.